Here is a 366-residue protein sequence, read N- to C-terminus: Gelsolin-like protein 2 (366 aa).

Gelsolin-like repeat units lie at residues 55–139 (NFKV…DLFL), 177–252 (KHIV…HEFY), and 286–327 (KSTV…AQEK). The segment at 100-116 (KSTQDEYCVAAYKTVEL) is actin binding. The interval 104–107 (DEYC) is actin-actin interfilament contact point.

The protein belongs to the villin/gelsolin family. As to quaternary structure, interacts with actin monomers and filaments. Expressed in circular and longitudinal muscle, pseudohearts, pharynx and gizzard. Not expressed in seminal vesicles.

It is found in the cytoplasm. Its subcellular location is the cytoskeleton. Its function is as follows. Calcium-regulated protein that binds to the plus (or barbed) ends of actin monomers or filaments, preventing monomer exchange (end-blocking or capping). Can promote the assembly of monomers into filaments (nucleation) as well as sever existing filaments. This Lumbricus terrestris (Common earthworm) protein is Gelsolin-like protein 2.